Reading from the N-terminus, the 320-residue chain is Malate dehydrogenase (320 aa).

NAD(+) contacts are provided by residues 10–15 (GSGMIG) and aspartate 34. Residues arginine 83 and arginine 89 each contribute to the substrate site. Residues asparagine 96 and 119 to 121 (ITN) contribute to the NAD(+) site. The substrate site is built by asparagine 121 and arginine 152. The Proton acceptor role is filled by histidine 176.

The protein belongs to the LDH/MDH superfamily. MDH type 3 family.

The catalysed reaction is (S)-malate + NAD(+) = oxaloacetate + NADH + H(+). Its function is as follows. Catalyzes the reversible oxidation of malate to oxaloacetate. This Brucella melitensis biotype 1 (strain ATCC 23456 / CCUG 17765 / NCTC 10094 / 16M) protein is Malate dehydrogenase.